A 203-amino-acid chain; its full sequence is Imidazoleglycerol-phosphate dehydratase (203 aa).

This sequence belongs to the imidazoleglycerol-phosphate dehydratase family.

The protein resides in the cytoplasm. The enzyme catalyses D-erythro-1-(imidazol-4-yl)glycerol 3-phosphate = 3-(imidazol-4-yl)-2-oxopropyl phosphate + H2O. It functions in the pathway amino-acid biosynthesis; L-histidine biosynthesis; L-histidine from 5-phospho-alpha-D-ribose 1-diphosphate: step 6/9. The protein is Imidazoleglycerol-phosphate dehydratase of Deinococcus geothermalis (strain DSM 11300 / CIP 105573 / AG-3a).